Here is an 81-residue protein sequence, read N- to C-terminus: ATP synthase subunit c (81 aa).

A run of 2 helical transmembrane segments spans residues 14–34 (YLGAGLAAIGCIGGGVGIGTV) and 60–80 (LAFAEVTSLYALFVAIMLLFV).

Belongs to the ATPase C chain family. As to quaternary structure, F-type ATPases have 2 components, F(1) - the catalytic core - and F(0) - the membrane proton channel. F(1) has five subunits: alpha(3), beta(3), gamma(1), delta(1), epsilon(1). F(0) has three main subunits: a(1), b(2) and c(10-14). The alpha and beta chains form an alternating ring which encloses part of the gamma chain. F(1) is attached to F(0) by a central stalk formed by the gamma and epsilon chains, while a peripheral stalk is formed by the delta and b chains.

Its subcellular location is the cell membrane. In terms of biological role, f(1)F(0) ATP synthase produces ATP from ADP in the presence of a proton or sodium gradient. F-type ATPases consist of two structural domains, F(1) containing the extramembraneous catalytic core and F(0) containing the membrane proton channel, linked together by a central stalk and a peripheral stalk. During catalysis, ATP synthesis in the catalytic domain of F(1) is coupled via a rotary mechanism of the central stalk subunits to proton translocation. Its function is as follows. Key component of the F(0) channel; it plays a direct role in translocation across the membrane. A homomeric c-ring of between 10-14 subunits forms the central stalk rotor element with the F(1) delta and epsilon subunits. The protein is ATP synthase subunit c of Clostridium acetobutylicum (strain ATCC 824 / DSM 792 / JCM 1419 / IAM 19013 / LMG 5710 / NBRC 13948 / NRRL B-527 / VKM B-1787 / 2291 / W).